Consider the following 48-residue polypeptide: Cytochrome b559 subunit beta (48 aa).

The chain crosses the membrane as a helical span at residues 23-39 (WLAVHALAIPSVFFLGA). Residue histidine 27 coordinates heme.

The protein belongs to the PsbE/PsbF family. As to quaternary structure, heterodimer of an alpha subunit and a beta subunit. PSII is composed of 1 copy each of membrane proteins PsbA, PsbB, PsbC, PsbD, PsbE, PsbF, PsbH, PsbI, PsbJ, PsbK, PsbL, PsbM, PsbT, PsbX, PsbY, Psb30/Ycf12, peripheral proteins PsbO, CyanoQ (PsbQ), PsbU, PsbV and a large number of cofactors. It forms dimeric complexes. Heme b is required as a cofactor.

The protein resides in the cellular thylakoid membrane. Its function is as follows. This b-type cytochrome is tightly associated with the reaction center of photosystem II (PSII). PSII is a light-driven water:plastoquinone oxidoreductase that uses light energy to abstract electrons from H(2)O, generating O(2) and a proton gradient subsequently used for ATP formation. It consists of a core antenna complex that captures photons, and an electron transfer chain that converts photonic excitation into a charge separation. In Prochlorococcus marinus (strain MIT 9515), this protein is Cytochrome b559 subunit beta.